The primary structure comprises 103 residues: Flagellar hook-basal body complex protein FliE (103 aa).

It belongs to the FliE family.

It localises to the bacterial flagellum basal body. The sequence is that of Flagellar hook-basal body complex protein FliE from Cronobacter sakazakii (strain ATCC BAA-894) (Enterobacter sakazakii).